A 268-amino-acid polypeptide reads, in one-letter code: Hydroxyethylthiazole kinase (268 aa).

Residue Met-47 participates in substrate binding. Positions 122 and 168 each coordinate ATP. Ala-195 serves as a coordination point for substrate.

Belongs to the Thz kinase family. Requires Mg(2+) as cofactor.

The catalysed reaction is 5-(2-hydroxyethyl)-4-methylthiazole + ATP = 4-methyl-5-(2-phosphooxyethyl)-thiazole + ADP + H(+). The protein operates within cofactor biosynthesis; thiamine diphosphate biosynthesis; 4-methyl-5-(2-phosphoethyl)-thiazole from 5-(2-hydroxyethyl)-4-methylthiazole: step 1/1. Catalyzes the phosphorylation of the hydroxyl group of 4-methyl-5-beta-hydroxyethylthiazole (THZ). This Rhizobium rhizogenes (strain K84 / ATCC BAA-868) (Agrobacterium radiobacter) protein is Hydroxyethylthiazole kinase.